The primary structure comprises 275 residues: NH(3)-dependent NAD(+) synthetase (275 aa).

46 to 53 is an ATP binding site; that stretch reads GISGGQDS. A Mg(2+)-binding site is contributed by D52. R140 is a binding site for deamido-NAD(+). T160 contacts ATP. E165 serves as a coordination point for Mg(2+). Positions 173 and 180 each coordinate deamido-NAD(+). ATP contacts are provided by K189 and T211. A deamido-NAD(+)-binding site is contributed by 260–261; the sequence is HK.

Belongs to the NAD synthetase family. Homodimer.

It carries out the reaction deamido-NAD(+) + NH4(+) + ATP = AMP + diphosphate + NAD(+) + H(+). It participates in cofactor biosynthesis; NAD(+) biosynthesis; NAD(+) from deamido-NAD(+) (ammonia route): step 1/1. Its function is as follows. Catalyzes the ATP-dependent amidation of deamido-NAD to form NAD. Uses ammonia as a nitrogen source. This Escherichia coli O6:K15:H31 (strain 536 / UPEC) protein is NH(3)-dependent NAD(+) synthetase.